Consider the following 329-residue polypeptide: GTP 3',8-cyclase (329 aa).

Residues 8–229 (AFARTFYYLR…AGWQRRLPGR (222 aa)) form the Radical SAM core domain. Arg17 is a GTP binding site. [4Fe-4S] cluster contacts are provided by Cys24 and Cys28. Tyr30 provides a ligand contact to S-adenosyl-L-methionine. Residue Cys31 coordinates [4Fe-4S] cluster. Arg68 is a binding site for GTP. Residue Gly72 participates in S-adenosyl-L-methionine binding. GTP is bound at residue Thr99. Ser123 provides a ligand contact to S-adenosyl-L-methionine. A GTP-binding site is contributed by Lys160. Met194 contacts S-adenosyl-L-methionine. Residues Cys257 and Cys260 each contribute to the [4Fe-4S] cluster site. 262-264 (RLR) contributes to the GTP binding site. Cys274 is a binding site for [4Fe-4S] cluster.

This sequence belongs to the radical SAM superfamily. MoaA family. As to quaternary structure, monomer and homodimer. Requires [4Fe-4S] cluster as cofactor.

The catalysed reaction is GTP + AH2 + S-adenosyl-L-methionine = (8S)-3',8-cyclo-7,8-dihydroguanosine 5'-triphosphate + 5'-deoxyadenosine + L-methionine + A + H(+). The protein operates within cofactor biosynthesis; molybdopterin biosynthesis. In terms of biological role, catalyzes the cyclization of GTP to (8S)-3',8-cyclo-7,8-dihydroguanosine 5'-triphosphate. In Edwardsiella ictaluri (strain 93-146), this protein is GTP 3',8-cyclase.